A 247-amino-acid polypeptide reads, in one-letter code: Putative 2-succinyl-6-hydroxy-2,4-cyclohexadiene-1-carboxylate synthase (247 aa).

The region spanning 4 to 229 (IIFLHGLLGT…CAGHNSHLEN (226 aa)) is the AB hydrolase-1 domain.

Belongs to the AB hydrolase superfamily. MenH family. In terms of assembly, monomer.

The enzyme catalyses 5-enolpyruvoyl-6-hydroxy-2-succinyl-cyclohex-3-ene-1-carboxylate = (1R,6R)-6-hydroxy-2-succinyl-cyclohexa-2,4-diene-1-carboxylate + pyruvate. It participates in quinol/quinone metabolism; 1,4-dihydroxy-2-naphthoate biosynthesis; 1,4-dihydroxy-2-naphthoate from chorismate: step 3/7. Its pathway is quinol/quinone metabolism; menaquinone biosynthesis. In terms of biological role, catalyzes a proton abstraction reaction that results in 2,5-elimination of pyruvate from 2-succinyl-5-enolpyruvyl-6-hydroxy-3-cyclohexene-1-carboxylate (SEPHCHC) and the formation of 2-succinyl-6-hydroxy-2,4-cyclohexadiene-1-carboxylate (SHCHC). The chain is Putative 2-succinyl-6-hydroxy-2,4-cyclohexadiene-1-carboxylate synthase from Haemophilus influenzae (strain ATCC 51907 / DSM 11121 / KW20 / Rd).